Reading from the N-terminus, the 623-residue chain is Aspartate--tRNA(Asp/Asn) ligase (623 aa).

Position 175 (glutamate 175) interacts with L-aspartate. The segment at 199-202 (QQFK) is aspartate. The L-aspartate site is built by arginine 221 and histidine 455. 221–223 (RDE) is an ATP binding site. Residue glutamate 517 coordinates ATP. Arginine 524 serves as a coordination point for L-aspartate. 569–572 (GVDR) is a binding site for ATP.

This sequence belongs to the class-II aminoacyl-tRNA synthetase family. Type 1 subfamily. In terms of assembly, homodimer.

The protein resides in the cytoplasm. The catalysed reaction is tRNA(Asx) + L-aspartate + ATP = L-aspartyl-tRNA(Asx) + AMP + diphosphate. Aspartyl-tRNA synthetase with relaxed tRNA specificity since it is able to aspartylate not only its cognate tRNA(Asp) but also tRNA(Asn). Reaction proceeds in two steps: L-aspartate is first activated by ATP to form Asp-AMP and then transferred to the acceptor end of tRNA(Asp/Asn). The polypeptide is Aspartate--tRNA(Asp/Asn) ligase (Methylocella silvestris (strain DSM 15510 / CIP 108128 / LMG 27833 / NCIMB 13906 / BL2)).